The primary structure comprises 136 residues: Large ribosomal subunit protein uL14 (136 aa).

This sequence belongs to the universal ribosomal protein uL14 family.

This Dictyostelium discoideum (Social amoeba) protein is Large ribosomal subunit protein uL14 (rpl23).